The following is a 435-amino-acid chain: Mitochondrial association factor 1 form a1 (435 aa).

The signal sequence occupies residues 1-20 (MWRIWRCRLSFLFATGCLLG). The Vacuolar portion of the chain corresponds to 21 to 96 (ALTAGLGSQM…VTARRRRNRR (76 aa)). Residues 97 to 117 (IALIATAVGVAVILAALYVLR) traverse the membrane as a helical segment. Residues 118-435 (RRRAQPPQEP…ERTYTFPQGD (318 aa)) lie on the Cytoplasmic side of the membrane. The segment at 120 to 159 (RAQPPQEPEPPTRLRTPRPRAPSGQQQPSESEPPAGVPMT) is disordered.

In terms of assembly, interacts with host SAMM50.

It is found in the parasitophorous vacuole membrane. Functionally, during host cell infection by tachyzoites, does not play a role in tethering the parasitophorous vacuole to the host mitochondria, probably because it does not bind host mitochondrial import protein TOMM70. The chain is Mitochondrial association factor 1 form a1 from Toxoplasma gondii (strain ATCC 50611 / Me49).